A 383-amino-acid chain; its full sequence is Transposase InsI for insertion sequence element IS30C (383 aa).

The Integrase catalytic domain occupies 213–379; sequence VNGTPIHERS…TPKEIIERGV (167 aa).

The protein belongs to the transposase IS30 family.

Its function is as follows. Required for the transposition of the insertion element. In Escherichia coli (strain K12), this protein is Transposase InsI for insertion sequence element IS30C (insI3).